A 352-amino-acid polypeptide reads, in one-letter code: Photosystem II D2 protein (352 aa).

Residue T2 is modified to N-acetylthreonine. A Phosphothreonine modification is found at T2. The helical transmembrane segment at 40-60 (CAYFAVGGWLTGTTFVTSWYT) threads the bilayer. H117 is a chlorophyll a binding site. A helical membrane pass occupies residues 124–140 (GFMLRQFEIARAIGLRP). Residues Q129 and N142 each contribute to the pheophytin a site. A helical transmembrane segment spans residues 152–165 (VFVSVFLIYPLGQS). Chlorophyll a is bound at residue H197. Residues 207–227 (AALLCAIHGATVENTLFEDGD) form a helical membrane-spanning segment. H214 and F261 together coordinate a plastoquinone. H214 is a Fe cation binding site. H268 is a Fe cation binding site. Residues 278–294 (GLWMSAIGVVGLALNLR) traverse the membrane as a helical segment.

It belongs to the reaction center PufL/M/PsbA/D family. As to quaternary structure, PSII is composed of 1 copy each of membrane proteins PsbA, PsbB, PsbC, PsbD, PsbE, PsbF, PsbH, PsbI, PsbJ, PsbK, PsbL, PsbM, PsbT, PsbX, PsbY, PsbZ, Psb30/Ycf12, at least 3 peripheral proteins of the oxygen-evolving complex and a large number of cofactors. It forms dimeric complexes. The D1/D2 heterodimer binds P680, chlorophylls that are the primary electron donor of PSII, and subsequent electron acceptors. It shares a non-heme iron and each subunit binds pheophytin, quinone, additional chlorophylls, carotenoids and lipids. There is also a Cl(-1) ion associated with D1 and D2, which is required for oxygen evolution. The PSII complex binds additional chlorophylls, carotenoids and specific lipids. serves as cofactor.

The protein resides in the plastid. It is found in the chloroplast thylakoid membrane. The catalysed reaction is 2 a plastoquinone + 4 hnu + 2 H2O = 2 a plastoquinol + O2. In terms of biological role, photosystem II (PSII) is a light-driven water:plastoquinone oxidoreductase that uses light energy to abstract electrons from H(2)O, generating O(2) and a proton gradient subsequently used for ATP formation. It consists of a core antenna complex that captures photons, and an electron transfer chain that converts photonic excitation into a charge separation. The D1/D2 (PsbA/PsbD) reaction center heterodimer binds P680, the primary electron donor of PSII as well as several subsequent electron acceptors. D2 is needed for assembly of a stable PSII complex. This is Photosystem II D2 protein from Nephroselmis olivacea (Green alga).